Consider the following 368-residue polypeptide: Quinolinate synthase (368 aa).

Iminosuccinate is bound by residues H46 and S63. Position 110 (C110) interacts with [4Fe-4S] cluster. Residues 141 to 143 (YVN) and S162 contribute to the iminosuccinate site. C230 contacts [4Fe-4S] cluster. Residues 256–258 (HPE) and T273 contribute to the iminosuccinate site. C320 is a [4Fe-4S] cluster binding site.

It belongs to the quinolinate synthase family. Type 3 subfamily. The cofactor is [4Fe-4S] cluster.

The protein resides in the cytoplasm. The catalysed reaction is iminosuccinate + dihydroxyacetone phosphate = quinolinate + phosphate + 2 H2O + H(+). Its pathway is cofactor biosynthesis; NAD(+) biosynthesis; quinolinate from iminoaspartate: step 1/1. Its function is as follows. Catalyzes the condensation of iminoaspartate with dihydroxyacetone phosphate to form quinolinate. The polypeptide is Quinolinate synthase (Bacillus thuringiensis (strain Al Hakam)).